The following is a 252-amino-acid chain: Imidazole glycerol phosphate synthase subunit HisF (252 aa).

Active-site residues include Asp-11 and Asp-130.

This sequence belongs to the HisA/HisF family. As to quaternary structure, heterodimer of HisH and HisF.

The protein localises to the cytoplasm. The enzyme catalyses 5-[(5-phospho-1-deoxy-D-ribulos-1-ylimino)methylamino]-1-(5-phospho-beta-D-ribosyl)imidazole-4-carboxamide + L-glutamine = D-erythro-1-(imidazol-4-yl)glycerol 3-phosphate + 5-amino-1-(5-phospho-beta-D-ribosyl)imidazole-4-carboxamide + L-glutamate + H(+). It functions in the pathway amino-acid biosynthesis; L-histidine biosynthesis; L-histidine from 5-phospho-alpha-D-ribose 1-diphosphate: step 5/9. Functionally, IGPS catalyzes the conversion of PRFAR and glutamine to IGP, AICAR and glutamate. The HisF subunit catalyzes the cyclization activity that produces IGP and AICAR from PRFAR using the ammonia provided by the HisH subunit. The protein is Imidazole glycerol phosphate synthase subunit HisF of Alkaliphilus metalliredigens (strain QYMF).